We begin with the raw amino-acid sequence, 360 residues long: Phenylalanine--tRNA ligase alpha subunit (360 aa).

Glu-260 is a Mg(2+) binding site.

The protein belongs to the class-II aminoacyl-tRNA synthetase family. Phe-tRNA synthetase alpha subunit type 1 subfamily. As to quaternary structure, tetramer of two alpha and two beta subunits. Mg(2+) serves as cofactor.

Its subcellular location is the cytoplasm. It catalyses the reaction tRNA(Phe) + L-phenylalanine + ATP = L-phenylalanyl-tRNA(Phe) + AMP + diphosphate + H(+). The chain is Phenylalanine--tRNA ligase alpha subunit from Bradyrhizobium sp. (strain ORS 278).